The primary structure comprises 354 residues: Methylthioribose-1-phosphate isomerase (354 aa).

Residues R54–A56, R97, and Q204 each bind substrate. The Proton donor role is filled by D245. N255–K256 serves as a coordination point for substrate.

The protein belongs to the eIF-2B alpha/beta/delta subunits family. MtnA subfamily.

It catalyses the reaction 5-(methylsulfanyl)-alpha-D-ribose 1-phosphate = 5-(methylsulfanyl)-D-ribulose 1-phosphate. The protein operates within amino-acid biosynthesis; L-methionine biosynthesis via salvage pathway; L-methionine from S-methyl-5-thio-alpha-D-ribose 1-phosphate: step 1/6. Its function is as follows. Catalyzes the interconversion of methylthioribose-1-phosphate (MTR-1-P) into methylthioribulose-1-phosphate (MTRu-1-P). The polypeptide is Methylthioribose-1-phosphate isomerase (Albidiferax ferrireducens (strain ATCC BAA-621 / DSM 15236 / T118) (Rhodoferax ferrireducens)).